Here is a 229-residue protein sequence, read N- to C-terminus: MDVRCLISPNLLNSKIKVSGNTHHLPFSSLSKKHQASSPIQAAINGGGSSKTVKRLITLSPSEGKWNGNWKTQYDVSLRDLQLQDLVEDGPPNSRVSVDLSVQRHASMGLSVDGRIMTSIARKCSICSSLYPRLIDTSFTVWILPSSRENRASTLPEIGGDDPSVIYVRPGYEANLDSLVQDTIRLTTYAKDICSDSCEKSEPTLHYVGQTNTASVDKRWSRLLELKKK.

Residues 1 to 42 (MDVRCLISPNLLNSKIKVSGNTHHLPFSSLSKKHQASSPIQA) constitute a chloroplast transit peptide.

The protein belongs to the DUF177 domain family.

Its subcellular location is the plastid. It localises to the chloroplast. Functionally, may play a role in synthesis, processing and/or stability of 23S rRNA. This is Large ribosomal RNA subunit accumulation protein YCED homolog 2, chloroplastic from Arabidopsis thaliana (Mouse-ear cress).